The chain runs to 115 residues: MKFVLLFGVLLVTLFSYSSAEMLDDFDQADEDELLSLIEKEEARAKECTPRFYDCSHDRHSCYRSELFKDVCTCFYPEGGDNEVCTCQQPKHLKYMEKAAGKAKKFGGKIKKWFG.

An N-terminal signal peptide occupies residues 1–20 (MKFVLLFGVLLVTLFSYSSA). The propeptide occupies 21–44 (EMLDDFDQADEDELLSLIEKEEAR). 3 cysteine pairs are disulfide-bonded: cysteine 55/cysteine 72, cysteine 62/cysteine 87, and cysteine 74/cysteine 85.

The protein belongs to the neurotoxin 19 (CSTX) family. 01 subfamily. In terms of tissue distribution, expressed by the venom gland.

The protein localises to the secreted. The chain is U3-lycotoxin-Ls1l from Lycosa singoriensis (Wolf spider).